The sequence spans 82 residues: Small ribosomal subunit protein bS16 (82 aa).

This sequence belongs to the bacterial ribosomal protein bS16 family.

The polypeptide is Small ribosomal subunit protein bS16 (Sodalis glossinidius (strain morsitans)).